The sequence spans 216 residues: Ras-related protein Rab-5C (216 aa).

Positions 30, 31, 33, 34, 35, 36, 47, 48, 53, and 79 each coordinate GTP. S35 contributes to the Mg(2+) binding site. Short sequence motifs (switch) lie at residues 45–57 (QFHEYQESTIGAA) and 78–94 (AGQERYHSLAPMYYRGA). T53 contacts Mg(2+). Phosphoserine is present on S85. Positions 134, 135, 137, 165, and 166 each coordinate GTP. The tract at residues 185–216 (NEPQNAAGAPGRTRGVDLQESNPASRSQCCSN) is disordered. The segment covering 203–216 (QESNPASRSQCCSN) has biased composition (polar residues). 2 S-geranylgeranyl cysteine lipidation sites follow: C213 and C214.

The protein belongs to the small GTPase superfamily. Rab family. In terms of assembly, interacts with EEA1 and INCA1. Interacts with GDI1, GDI2, CHML and CHM; phosphorylation at Ser-85 disrupts this interaction. It depends on Mg(2+) as a cofactor. Post-translationally, phosphorylation of Ser-85 in the switch II region by LRRK2 prevents the association of RAB regulatory proteins, including CHM, CHML and RAB GDP dissociation inhibitors GDI1 and GDI2.

It is found in the cell membrane. The protein localises to the early endosome membrane. Its subcellular location is the melanosome. The catalysed reaction is GTP + H2O = GDP + phosphate + H(+). Regulated by guanine nucleotide exchange factors (GEFs) which promote the exchange of bound GDP for free GTP. Regulated by GTPase activating proteins (GAPs) which increase the GTP hydrolysis activity. Inhibited by GDP dissociation inhibitors (GDIs). Its function is as follows. The small GTPases Rab are key regulators of intracellular membrane trafficking, from the formation of transport vesicles to their fusion with membranes. Rabs cycle between an inactive GDP-bound form and an active GTP-bound form that is able to recruit to membranes different sets of downstream effectors directly responsible for vesicle formation, movement, tethering and fusion. This chain is Ras-related protein Rab-5C, found in Mus musculus (Mouse).